The following is a 149-amino-acid chain: MVLILNGPNLNLLGRREPEVYGRTTLEELEALCEAWGAELGLGVVFRQTNYEGQLIEWVQQAHQEGFLAIVLNPGALTHYSYALLDAIRAQPLPVVEVHLTNLHAREEFRRHSVTAPACRGIVSGFGPLSYKLALVYLAETLEVGGEGF.

Y21 serves as the catalytic Proton acceptor. Substrate contacts are provided by N73, H79, and D86. H99 functions as the Proton donor in the catalytic mechanism. Substrate is bound by residues 100–101 (LT) and R110.

Belongs to the type-II 3-dehydroquinase family. Homododecamer.

It catalyses the reaction 3-dehydroquinate = 3-dehydroshikimate + H2O. It participates in metabolic intermediate biosynthesis; chorismate biosynthesis; chorismate from D-erythrose 4-phosphate and phosphoenolpyruvate: step 3/7. Functionally, catalyzes a trans-dehydration via an enolate intermediate. In Thermus thermophilus (strain ATCC BAA-163 / DSM 7039 / HB27), this protein is 3-dehydroquinate dehydratase.